A 1186-amino-acid chain; its full sequence is Syntaxin-binding protein 5-like (1186 aa).

Met-1 carries the post-translational modification N-acetylmethionine. A disordered region spans residues 15–40 (ASSPGSGSSSGSNSGGGAGSGSVHPA). A compositionally biased stretch (low complexity) spans 16 to 26 (SSPGSGSSSGS). WD repeat units lie at residues 74–107 (TALA…CYCQ), 114–153 (VLQL…SLKF), 158–194 (ITYC…GYVI), 213–247 (HLSD…ELRV), 253–285 (IHSI…PSRP), 307–349 (PILK…KAIT), 357–391 (IVEF…VVDL), 413–490 (TCTA…YKLK), 518–629 (QMIY…ELVI), and 643–705 (TSLA…IADN). A Phosphothreonine modification is found at Thr-568. 3 positions are modified to phosphoserine: Ser-574, Ser-589, and Ser-593. A Phosphothreonine modification is found at Thr-596. The residue at position 599 (Ser-599) is a Phosphoserine. Position 709 is an omega-N-methylarginine (Arg-709). Residues 748 to 769 (TSDHVNGHCTSPTSQSCSSGKR) show a composition bias toward polar residues. Residues 748 to 771 (TSDHVNGHCTSPTSQSCSSGKRLS) are disordered. 11 positions are modified to phosphoserine: Ser-763, Ser-765, Ser-766, Ser-771, Ser-772, Ser-793, Ser-800, Ser-812, Ser-820, Ser-822, and Ser-823. 4 WD repeats span residues 832 to 889 (ITAL…SGTF), 898 to 969 (TFSC…QTCL), 974 to 1018 (ITET…LDVN), and 1032 to 1055 (CFTN…TYSQ). Position 1093 is a phosphothreonine (Thr-1093). A v-SNARE coiled-coil homology domain is found at 1121–1181 (SIEGMKGAAG…HELMLKYKDK (61 aa)).

The protein belongs to the WD repeat L(2)GL family. In terms of assembly, interacts with STX1A and STX4. Post-translationally, phosphorylated, leading to STXBP5L increased turnover and subsequent de-repression of insulin secretion. Phosphorylated on serine residues in response to glucose or phorbol esters. Ubiquitinated by the E3 ligase SYVN1, leading to STXBP5L proteasomal degradation. As to expression, detected in kidney, hippocampus and lung carcinoma.

Its subcellular location is the cytoplasm. It localises to the cell membrane. The protein localises to the membrane. In terms of biological role, plays a role in vesicle trafficking and exocytosis inhibition. In pancreatic beta-cells, inhibits insulin secretion probably by interacting with and regulating STX1A and STX4, key t-SNARE proteins involved in the fusion of insulin granules to the plasma membrane. Also plays a role in neurotransmitter release by inhibiting basal acetylcholine release from axon terminals and by preventing synaptic fatigue upon repetitive stimulation. Promotes as well axonal outgrowth. This is Syntaxin-binding protein 5-like (STXBP5L) from Homo sapiens (Human).